The sequence spans 375 residues: Succinyl-diaminopimelate desuccinylase (375 aa).

Histidine 66 contributes to the Zn(2+) binding site. Residue aspartate 68 is part of the active site. Residue aspartate 99 participates in Zn(2+) binding. Glutamate 133 functions as the Proton acceptor in the catalytic mechanism. Glutamate 134, glutamate 162, and histidine 348 together coordinate Zn(2+).

This sequence belongs to the peptidase M20A family. DapE subfamily. Homodimer. It depends on Zn(2+) as a cofactor. Co(2+) serves as cofactor.

It catalyses the reaction N-succinyl-(2S,6S)-2,6-diaminopimelate + H2O = (2S,6S)-2,6-diaminopimelate + succinate. It participates in amino-acid biosynthesis; L-lysine biosynthesis via DAP pathway; LL-2,6-diaminopimelate from (S)-tetrahydrodipicolinate (succinylase route): step 3/3. In terms of biological role, catalyzes the hydrolysis of N-succinyl-L,L-diaminopimelic acid (SDAP), forming succinate and LL-2,6-diaminopimelate (DAP), an intermediate involved in the bacterial biosynthesis of lysine and meso-diaminopimelic acid, an essential component of bacterial cell walls. The polypeptide is Succinyl-diaminopimelate desuccinylase (Klebsiella pneumoniae subsp. pneumoniae (strain ATCC 700721 / MGH 78578)).